Consider the following 127-residue polypeptide: MIIGVGTDLVEIARIAQSIERLGERFIDRILTAAEKERWSEISNLEKANSFVAKRFAAKEAAVKALGTGIGLGVSFQHFNVSNLPSGQPVLTVDESIIARYDFPVSWHLSLTDEKAYAQAFVILESK.

Mg(2+) contacts are provided by D8 and E60.

The protein belongs to the P-Pant transferase superfamily. AcpS family. Mg(2+) serves as cofactor.

The protein localises to the cytoplasm. The enzyme catalyses apo-[ACP] + CoA = holo-[ACP] + adenosine 3',5'-bisphosphate + H(+). Its function is as follows. Transfers the 4'-phosphopantetheine moiety from coenzyme A to a Ser of acyl-carrier-protein. The sequence is that of Holo-[acyl-carrier-protein] synthase from Marinomonas sp. (strain MWYL1).